Reading from the N-terminus, the 207-residue chain is MKTKIFSLANEEVGEISLNEDIFAVEFIRDDIIKQVIDWQRAKAMSGNHKTKTVSEVLGTTKKPFKQKGTGNARQGSLRSVQMRGGGVAHGPRVRSHATKLPKKVRKLGLIHALSEKCAEGKLLVIDSLKLDKPKTSALVNILNKFQGKSFFVIDGNEVDINFSLAAKNIYNTVIVPQIGANVYDIIRHEYVLLSQEAVSVLEERLR.

This sequence belongs to the universal ribosomal protein uL4 family. In terms of assembly, part of the 50S ribosomal subunit.

Its function is as follows. One of the primary rRNA binding proteins, this protein initially binds near the 5'-end of the 23S rRNA. It is important during the early stages of 50S assembly. It makes multiple contacts with different domains of the 23S rRNA in the assembled 50S subunit and ribosome. In terms of biological role, forms part of the polypeptide exit tunnel. The protein is Large ribosomal subunit protein uL4 of Rickettsia africae (strain ESF-5).